The chain runs to 261 residues: Cytochrome c oxidase subunit 3 (261 aa).

The Mitochondrial matrix segment spans residues 1–15 (MTHQTHAYHMVNPSP). The chain crosses the membrane as a helical span at residues 16–34 (WPLTGALSALLMTSGLTMW). At 35–40 (FHFNST) the chain is on the mitochondrial intermembrane side. A helical transmembrane segment spans residues 41–66 (ILLMLGLTTNMLTMYQWWRDIIREST). Residues 67-72 (FQGHHT) lie on the Mitochondrial matrix side of the membrane. A helical membrane pass occupies residues 73–105 (PVVQKGLRYGMILFIISEVLFFTGFFWAFYHSS). Residues 106-128 (LAPTPELGGCWPPTGIHPLNPLE) are Mitochondrial intermembrane-facing. A helical transmembrane segment spans residues 129–152 (VPLLNTSVLLASGVSITWAHHSLM). Residues 153 to 155 (EGH) lie on the Mitochondrial matrix side of the membrane. Residues 156–183 (RNHMLQALFITIALGVYFTLLQASEYYE) form a helical membrane-spanning segment. The Mitochondrial intermembrane portion of the chain corresponds to 184 to 190 (APFTISD). Residues 191–223 (GVYGSTFFVATGFHGLHVIIGSTFLIVCFFRQL) traverse the membrane as a helical segment. The Mitochondrial matrix portion of the chain corresponds to 224 to 232 (KFHFTSSHH). Residues 233–256 (FGFEAAAWYWHFVDVVWLFLYVSI) form a helical membrane-spanning segment. Residues 257–261 (YWWGS) lie on the Mitochondrial intermembrane side of the membrane.

This sequence belongs to the cytochrome c oxidase subunit 3 family. In terms of assembly, component of the cytochrome c oxidase (complex IV, CIV), a multisubunit enzyme composed of 14 subunits. The complex is composed of a catalytic core of 3 subunits MT-CO1, MT-CO2 and MT-CO3, encoded in the mitochondrial DNA, and 11 supernumerary subunits COX4I, COX5A, COX5B, COX6A, COX6B, COX6C, COX7A, COX7B, COX7C, COX8 and NDUFA4, which are encoded in the nuclear genome. The complex exists as a monomer or a dimer and forms supercomplexes (SCs) in the inner mitochondrial membrane with NADH-ubiquinone oxidoreductase (complex I, CI) and ubiquinol-cytochrome c oxidoreductase (cytochrome b-c1 complex, complex III, CIII), resulting in different assemblies (supercomplex SCI(1)III(2)IV(1) and megacomplex MCI(2)III(2)IV(2)).

The protein localises to the mitochondrion inner membrane. It carries out the reaction 4 Fe(II)-[cytochrome c] + O2 + 8 H(+)(in) = 4 Fe(III)-[cytochrome c] + 2 H2O + 4 H(+)(out). Functionally, component of the cytochrome c oxidase, the last enzyme in the mitochondrial electron transport chain which drives oxidative phosphorylation. The respiratory chain contains 3 multisubunit complexes succinate dehydrogenase (complex II, CII), ubiquinol-cytochrome c oxidoreductase (cytochrome b-c1 complex, complex III, CIII) and cytochrome c oxidase (complex IV, CIV), that cooperate to transfer electrons derived from NADH and succinate to molecular oxygen, creating an electrochemical gradient over the inner membrane that drives transmembrane transport and the ATP synthase. Cytochrome c oxidase is the component of the respiratory chain that catalyzes the reduction of oxygen to water. Electrons originating from reduced cytochrome c in the intermembrane space (IMS) are transferred via the dinuclear copper A center (CU(A)) of subunit 2 and heme A of subunit 1 to the active site in subunit 1, a binuclear center (BNC) formed by heme A3 and copper B (CU(B)). The BNC reduces molecular oxygen to 2 water molecules using 4 electrons from cytochrome c in the IMS and 4 protons from the mitochondrial matrix. The sequence is that of Cytochrome c oxidase subunit 3 (MT-CO3) from Tragelaphus strepsiceros (Greater kudu).